A 204-amino-acid polypeptide reads, in one-letter code: Tumor protein D53 (204 aa).

Residues 1 to 20 (MEAQAQGLLETEPLQGTDED) are disordered. Positions 22-73 (VASADFSSMLSEEEKEELKAELVQLEDEITTLRQVLSAKERHLVEIKQKLGM) form a coiled coil. Ser29, Ser86, Ser122, and Ser131 each carry phosphoserine. Omega-N-methylarginine is present on Arg133. The residue at position 146 (Thr146) is a Phosphothreonine. Phosphoserine is present on residues Ser149 and Ser174.

It belongs to the TPD52 family. In terms of assembly, forms a homodimer or heterodimer with other members of the family.

The polypeptide is Tumor protein D53 (TPD52L1) (Homo sapiens (Human)).